The chain runs to 143 residues: Peptide methionine sulfoxide reductase MsrB (143 aa).

Positions 16-139 (DAELRRRLTP…NSAALNFESR (124 aa)) constitute a MsrB domain. The Zn(2+) site is built by Cys-55, Cys-58, Cys-104, and Cys-107. Residue Cys-128 is the Nucleophile of the active site.

Belongs to the MsrB Met sulfoxide reductase family. Requires Zn(2+) as cofactor.

The catalysed reaction is L-methionyl-[protein] + [thioredoxin]-disulfide + H2O = L-methionyl-(R)-S-oxide-[protein] + [thioredoxin]-dithiol. This Burkholderia cenocepacia (strain HI2424) protein is Peptide methionine sulfoxide reductase MsrB.